We begin with the raw amino-acid sequence, 456 residues long: Coenzyme F420 hydrogenase subunit alpha (456 aa).

Positions 63, 66, 432, and 435 each coordinate Ni(2+).

The protein belongs to the [NiFe]/[NiFeSe] hydrogenase large subunit family. In terms of assembly, pentamer of two alpha chains, two beta chains and a gamma chain. The cofactor is Ni(2+). Requires iron-sulfur cluster as cofactor. It depends on FAD as a cofactor.

Its subcellular location is the cell membrane. The catalysed reaction is oxidized coenzyme F420-(gamma-L-Glu)(n) + H2 + H(+) = reduced coenzyme F420-(gamma-L-Glu)(n). In terms of biological role, reduces the physiological low-potential two-electron acceptor coenzyme F420, and the artificial one-electron acceptor methylviologen. This chain is Coenzyme F420 hydrogenase subunit alpha (frhA), found in Methanosarcina barkeri (strain Fusaro / DSM 804).